An 880-amino-acid chain; its full sequence is Alanine--tRNA ligase (880 aa).

Zn(2+)-binding residues include H565, H569, C675, and H679.

Belongs to the class-II aminoacyl-tRNA synthetase family. It depends on Zn(2+) as a cofactor.

It localises to the cytoplasm. It catalyses the reaction tRNA(Ala) + L-alanine + ATP = L-alanyl-tRNA(Ala) + AMP + diphosphate. Its function is as follows. Catalyzes the attachment of alanine to tRNA(Ala) in a two-step reaction: alanine is first activated by ATP to form Ala-AMP and then transferred to the acceptor end of tRNA(Ala). Also edits incorrectly charged Ser-tRNA(Ala) and Gly-tRNA(Ala) via its editing domain. This is Alanine--tRNA ligase from Granulibacter bethesdensis (strain ATCC BAA-1260 / CGDNIH1).